The sequence spans 621 residues: Zinc metalloproteinase-disintegrin-like TSV-DM (621 aa).

A signal peptide spans 1-20 (MIQVLLVTICLAVFPYQGSS). The propeptide occupies 21-191 (IILESGNVND…EASQSNLTPE (171 aa)). The residue at position 192 (glutamine 192) is a Pyrrolidone carboxylic acid. The region spanning 200–396 (KYVKFFLVAD…NMPQCILKKP (197 aa)) is the Peptidase M12B domain. Asparagine 219 is a glycosylation site (N-linked (GlcNAc...) asparagine). Disulfide bonds link cysteine 311/cysteine 391, cysteine 351/cysteine 375, and cysteine 353/cysteine 358. Histidine 336 provides a ligand contact to Zn(2+). Residue glutamate 337 is part of the active site. Zn(2+) contacts are provided by histidine 340 and histidine 346. One can recognise a Disintegrin domain in the interval 404–489 (PPVCGNYFVE…AECTDRFQRN (86 aa)). Ca(2+)-binding residues include valine 406, asparagine 409, phenylalanine 411, glutamate 413, glutamate 416, and aspartate 419. Disulfide bonds link cysteine 407-cysteine 436, cysteine 418-cysteine 431, cysteine 420-cysteine 426, cysteine 430-cysteine 453, cysteine 444-cysteine 450, cysteine 449-cysteine 475, cysteine 462-cysteine 482, cysteine 469-cysteine 500, cysteine 493-cysteine 505, cysteine 512-cysteine 562, cysteine 527-cysteine 573, cysteine 540-cysteine 550, cysteine 557-cysteine 599, and cysteine 593-cysteine 605. The D/ECD-tripeptide motif lies at 468-470 (ECD). Ca(2+) contacts are provided by aspartate 470, methionine 471, aspartate 473, aspartate 484, and arginine 485. N-linked (GlcNAc...) asparagine glycosylation occurs at asparagine 502.

Belongs to the venom metalloproteinase (M12B) family. P-III subfamily. P-IIIc sub-subfamily. In terms of assembly, homodimer; disulfide-linked. Zn(2+) serves as cofactor. In terms of processing, the N-terminus is blocked. Expressed by the venom gland.

It localises to the secreted. Its activity is regulated as follows. Inhibited by EDTA and DTT, and partially inhibited by EGTA, but not inhibited by PMSF and NEM. Snake venom zinc metalloprotease that hydrolyzes the alpha-chain (FGA) and more slowly the beta-chain (FGB) of fibrinogen. Inhibits cell proliferation and induces cell morphologic changes transiently on human umbilical vein endothelial cells. The protein is Zinc metalloproteinase-disintegrin-like TSV-DM of Trimeresurus stejnegeri (Chinese green tree viper).